The sequence spans 444 residues: MPFIVNTDQDTREMLSVLGAASFDELIPDIPEEIRLKKALDLFPAMSEQEVKRLLEGLASSNTSTSDYVSYLGGGAYDHFIPSAIKTIVSRSEFYTAYTPYQAEVSQGTLQAIYEYQSLMCRLYDMDVANASMYDGATALAEAVLMAISVTGRQEVIVAGKLHPHYCEVLKTYLEAGGHSAVVQNTLENGVGTLDGLGALLTDRCAAVIVQQPNFYGSLEDVEAIGELAHSKGALFVVSADPVSLGLLAAPGSYGADIAVGEGQPLGNAQSFGGPYLGIFTVKQDLVRKIPGRLVGMTKDRNGDDGFILTLQTREQHIRREKATSNICTNQALNALHAAIYLSLLGKQGIIDVAEQSALKSHYLAEQIADIPGFSLKYSAPFFREFVVETPMAAREVISNLLEKKIFAGCDLSVYDEAGLLVAVTEKRTKAELDAFVEYLGALK.

This sequence belongs to the GcvP family. N-terminal subunit subfamily. As to quaternary structure, the glycine cleavage system is composed of four proteins: P, T, L and H. In this organism, the P 'protein' is a heterodimer of two subunits.

It carries out the reaction N(6)-[(R)-lipoyl]-L-lysyl-[glycine-cleavage complex H protein] + glycine + H(+) = N(6)-[(R)-S(8)-aminomethyldihydrolipoyl]-L-lysyl-[glycine-cleavage complex H protein] + CO2. The glycine cleavage system catalyzes the degradation of glycine. The P protein binds the alpha-amino group of glycine through its pyridoxal phosphate cofactor; CO(2) is released and the remaining methylamine moiety is then transferred to the lipoamide cofactor of the H protein. The chain is Probable glycine dehydrogenase (decarboxylating) subunit 1 from Chlorobium phaeobacteroides (strain DSM 266 / SMG 266 / 2430).